The following is a 239-amino-acid chain: Large ribosomal subunit protein uL1 (239 aa).

The protein belongs to the universal ribosomal protein uL1 family. In terms of assembly, part of the 50S ribosomal subunit.

Its function is as follows. Binds directly to 23S rRNA. The L1 stalk is quite mobile in the ribosome, and is involved in E site tRNA release. In terms of biological role, protein L1 is also a translational repressor protein, it controls the translation of the L11 operon by binding to its mRNA. The sequence is that of Large ribosomal subunit protein uL1 from Rickettsia canadensis (strain McKiel).